Reading from the N-terminus, the 110-residue chain is Large ribosomal subunit protein uL22 (110 aa).

Belongs to the universal ribosomal protein uL22 family. Part of the 50S ribosomal subunit.

Its function is as follows. This protein binds specifically to 23S rRNA; its binding is stimulated by other ribosomal proteins, e.g. L4, L17, and L20. It is important during the early stages of 50S assembly. It makes multiple contacts with different domains of the 23S rRNA in the assembled 50S subunit and ribosome. In terms of biological role, the globular domain of the protein is located near the polypeptide exit tunnel on the outside of the subunit, while an extended beta-hairpin is found that lines the wall of the exit tunnel in the center of the 70S ribosome. The sequence is that of Large ribosomal subunit protein uL22 from Syntrophotalea carbinolica (strain DSM 2380 / NBRC 103641 / GraBd1) (Pelobacter carbinolicus).